Reading from the N-terminus, the 615-residue chain is MPKLRSATSTEGRNMAGARALWRATGVKDNDFGKPIIAISNSFTQFVPGHVHLKDMGSLVAGAIEEAGGIAKEFNTIAVDDGIAMGHGGMLYSLPSRELIADSVEYMVNAHCADALVCISNCDKITPGMLMASLRLNIPVIFVSGGPMEAGKTKLSDKLIKLDLVDAMVAGADERVSDADSEQIERSACPTCGSCSGMFTANSMNCLTEALGLSLPGNGSMLATHADRRELFLEAGRRIMDLATRYYKHDDESALPRNIANFKAFENAMTLDIAMGGSSNTVLHLLAAAQEAEVDFTMDDIDRLSRLVPHLCKVAPATPKYHMEDVHRAGGVMGILGELDRANLLHNDAYHVAGENLAAVLAKYDIAQSDDAAVRKFFSAGPAGIPTTKAFSQDCRWDSVDDDRQQGCIRSREFAFSQEGGLAVLSGNVAVDGCIVKTAGVEVENHTFIGSARVYESQDDAVAGILGGEVVAGDVVVIRYEGPKGGPGMQEMLYPTSYLKSRGLGTQCALITDGRFSGGTSGLSIGHVSPEAAAGGTIGLVQTGDRIEIDIPARSIKLAISDVELAARRTAMEALGNDAWKPLGRVRHVSMALKAYALLATSADKGAVRDTSKLV.

Residue aspartate 81 coordinates Mg(2+). A [2Fe-2S] cluster-binding site is contributed by cysteine 122. Mg(2+) is bound by residues aspartate 123 and lysine 124. N6-carboxylysine is present on lysine 124. Cysteine 195 lines the [2Fe-2S] cluster pocket. Glutamate 491 serves as a coordination point for Mg(2+). Catalysis depends on serine 517, which acts as the Proton acceptor.

This sequence belongs to the IlvD/Edd family. As to quaternary structure, homodimer. Requires [2Fe-2S] cluster as cofactor. Mg(2+) is required as a cofactor.

The catalysed reaction is (2R)-2,3-dihydroxy-3-methylbutanoate = 3-methyl-2-oxobutanoate + H2O. The enzyme catalyses (2R,3R)-2,3-dihydroxy-3-methylpentanoate = (S)-3-methyl-2-oxopentanoate + H2O. The protein operates within amino-acid biosynthesis; L-isoleucine biosynthesis; L-isoleucine from 2-oxobutanoate: step 3/4. It participates in amino-acid biosynthesis; L-valine biosynthesis; L-valine from pyruvate: step 3/4. Functions in the biosynthesis of branched-chain amino acids. Catalyzes the dehydration of (2R,3R)-2,3-dihydroxy-3-methylpentanoate (2,3-dihydroxy-3-methylvalerate) into 2-oxo-3-methylpentanoate (2-oxo-3-methylvalerate) and of (2R)-2,3-dihydroxy-3-methylbutanoate (2,3-dihydroxyisovalerate) into 2-oxo-3-methylbutanoate (2-oxoisovalerate), the penultimate precursor to L-isoleucine and L-valine, respectively. In Shewanella pealeana (strain ATCC 700345 / ANG-SQ1), this protein is Dihydroxy-acid dehydratase.